The chain runs to 167 residues: Ubiquitin-conjugating enzyme E2 15 (167 aa).

Positions 5–165 (ASEQLLRKQL…VRRLVRRSIE (161 aa)) constitute a UBC core domain. Cysteine 90 (glycyl thioester intermediate) is an active-site residue.

Belongs to the ubiquitin-conjugating enzyme family.

The enzyme catalyses S-ubiquitinyl-[E1 ubiquitin-activating enzyme]-L-cysteine + [E2 ubiquitin-conjugating enzyme]-L-cysteine = [E1 ubiquitin-activating enzyme]-L-cysteine + S-ubiquitinyl-[E2 ubiquitin-conjugating enzyme]-L-cysteine.. It participates in protein modification; protein ubiquitination. Catalyzes the covalent attachment of ubiquitin to other proteins. Has a role in the formation of chromatin structures that influence the localization of transcriptional silencing factors. This is Ubiquitin-conjugating enzyme E2 15 (ubc15) from Schizosaccharomyces pombe (strain 972 / ATCC 24843) (Fission yeast).